A 168-amino-acid polypeptide reads, in one-letter code: Photosystem I assembly protein Ycf3 (168 aa).

3 TPR repeats span residues 35 to 68, 72 to 105, and 120 to 153; these read AFTY…EIDP, SYIL…NPFL, and GEQA…TPGN.

It belongs to the Ycf3 family.

The protein localises to the plastid. Its subcellular location is the chloroplast thylakoid membrane. Its function is as follows. Essential for the assembly of the photosystem I (PSI) complex. May act as a chaperone-like factor to guide the assembly of the PSI subunits. In Lactuca sativa (Garden lettuce), this protein is Photosystem I assembly protein Ycf3.